A 487-amino-acid chain; its full sequence is N-succinylglutamate 5-semialdehyde dehydrogenase (487 aa).

Residue 221-226 coordinates NAD(+); it reads GSSDTG. Residues glutamate 244 and cysteine 278 contribute to the active site.

Belongs to the aldehyde dehydrogenase family. AstD subfamily.

The catalysed reaction is N-succinyl-L-glutamate 5-semialdehyde + NAD(+) + H2O = N-succinyl-L-glutamate + NADH + 2 H(+). It participates in amino-acid degradation; L-arginine degradation via AST pathway; L-glutamate and succinate from L-arginine: step 4/5. In terms of biological role, catalyzes the NAD-dependent reduction of succinylglutamate semialdehyde into succinylglutamate. This is N-succinylglutamate 5-semialdehyde dehydrogenase from Paraburkholderia xenovorans (strain LB400).